The chain runs to 168 residues: Disulfide bond formation protein B (168 aa).

At 1 to 6 (MTSRWI) the chain is on the cytoplasmic side. A helical transmembrane segment spans residues 7–23 (FGLVFLVCAGLLAVAFY). The Periplasmic segment spans residues 24 to 41 (MEHVMGLEPCPLCWLQRF). A disulfide bond links cysteine 33 and cysteine 36. Residues 42-58 (GFMGAGLVSLLAFLHGP) traverse the membrane as a helical segment. Residues 59–65 (RGFGNRV) are Cytoplasmic-facing. Residues 66 to 82 (YGLLLIVAAGAGLAVAG) form a helical membrane-spanning segment. Topologically, residues 83–139 (RQLWLQSLPADQVPACGPSVDYMLEVLPWFEVLQTALKGTGDCAEVVWRFLGLSIPG) are periplasmic. The cysteines at positions 98 and 125 are disulfide-linked. A helical membrane pass occupies residues 140 to 158 (WTAVFFSLLIVLGLFVMLR). Residues 159 to 168 (RYSPRDWLQS) are Cytoplasmic-facing.

Belongs to the DsbB family.

It is found in the cell inner membrane. In terms of biological role, required for disulfide bond formation in some periplasmic proteins. Acts by oxidizing the DsbA protein. This is Disulfide bond formation protein B from Marinobacter nauticus (strain ATCC 700491 / DSM 11845 / VT8) (Marinobacter aquaeolei).